The chain runs to 135 residues: Ribonuclease VapC5 (135 aa).

One can recognise a PINc domain in the interval 9 to 130 (VLDTSVFIAT…FAALDGAASV (122 aa)). D11 and D100 together coordinate Mg(2+).

Belongs to the PINc/VapC protein family. Forms a complex with VapB5. The cofactor is Mg(2+).

Its subcellular location is the secreted. In terms of biological role, probable toxic component of a type II toxin-antitoxin (TA) system. The cognate antitoxin is VapB5. Has limited RNase activity on substrates; activity is seen with a VapC5-VapB5 complex. In Mycobacterium tuberculosis (strain ATCC 25618 / H37Rv), this protein is Ribonuclease VapC5.